An 874-amino-acid chain; its full sequence is Alanine--tRNA ligase (874 aa).

Residues H564, H568, C665, and H669 each contribute to the Zn(2+) site.

This sequence belongs to the class-II aminoacyl-tRNA synthetase family. It depends on Zn(2+) as a cofactor.

Its subcellular location is the cytoplasm. The enzyme catalyses tRNA(Ala) + L-alanine + ATP = L-alanyl-tRNA(Ala) + AMP + diphosphate. Its function is as follows. Catalyzes the attachment of alanine to tRNA(Ala) in a two-step reaction: alanine is first activated by ATP to form Ala-AMP and then transferred to the acceptor end of tRNA(Ala). Also edits incorrectly charged Ser-tRNA(Ala) and Gly-tRNA(Ala) via its editing domain. The sequence is that of Alanine--tRNA ligase from Paraburkholderia phymatum (strain DSM 17167 / CIP 108236 / LMG 21445 / STM815) (Burkholderia phymatum).